The primary structure comprises 143 residues: Large ribosomal subunit protein uL22c (143 aa).

It belongs to the universal ribosomal protein uL22 family. Part of the 50S ribosomal subunit.

The protein localises to the plastid. The protein resides in the chloroplast. Functionally, this protein binds specifically to 23S rRNA. Its function is as follows. The globular domain of the protein is located near the polypeptide exit tunnel on the outside of the subunit, while an extended beta-hairpin is found that lines the wall of the exit tunnel in the center of the 70S ribosome. The sequence is that of Large ribosomal subunit protein uL22c (rpl22) from Piper cenocladum (Ant piper).